The sequence spans 586 residues: FAD-linked oxidoreductase orf1 (586 aa).

The first 17 residues, 1 to 17 (MKSFATTVLLVTPGIYA), serve as a signal peptide directing secretion. N-linked (GlcNAc...) asparagine glycans are attached at residues Asn29, Asn51, Asn79, Asn110, Asn146, Asn188, Asn314, Asn321, Asn358, Asn402, Asn434, and Asn461. One can recognise an FAD-binding PCMH-type domain in the interval 124–303 (TLGNYVSYAI…LSMTAKVHPD (180 aa)).

Belongs to the oxygen-dependent FAD-linked oxidoreductase family.

The enzyme catalyses betaenone C = betaenone A. It participates in mycotoxin biosynthesis. Functionally, FAD-linked oxidoreductase; part of the gene cluster that mediates the biosynthesis of betaenones, phytotoxic polyketides involved in leaf spot disease in sugar beets. The first step of the pathway is the synthesis of dehydroprobetaenone I by the polyketide synthase bet1 and the enoyl reductase bet3 via condensation of one acetyl-CoA starter unit with 7 malonyl-CoA units and 5 methylations. The C-terminal reductase (R) domain of bet1 catalyzes the reductive release of the polyketide chain. Because bet1 lacks a designated enoylreductase (ER) domain, the required activity is provided the enoyl reductase bet3. The short-chain dehydrogenase/reductase bet4 then catalyzes reduction of dehydroprobetaenone I to probetaenone I. The cytochrome P450 monooxygenase bet2 catalyzes successive epoxidation, oxidation (resulting from epoxide opening) and hydroxylation to install a tertiary alcohol in the decaline ring to yield betaenone C from dehydroprobetaenone I and betaenone B from probetaenone I. The FAD-linked oxidoreductase (orf1) is probably responsible for the conversion of betaenone C to betaenone A via an intramolecular aldol reaction between C-1 and C-17 to form the bridged tricyclic system in betaenone A. This is FAD-linked oxidoreductase orf1 from Neocamarosporium betae (Beet black rot fungus).